The primary structure comprises 157 residues: Electron transfer flavoprotein regulatory factor 1 homolog (157 aa).

It belongs to the complex I LYR family.

The protein localises to the mitochondrion. This chain is Electron transfer flavoprotein regulatory factor 1 homolog, found in Dictyostelium discoideum (Social amoeba).